A 367-amino-acid chain; its full sequence is tRNA/tmRNA (uracil-C(5))-methyltransferase (367 aa).

Positions 182, 210, 215, 231, and 293 each coordinate S-adenosyl-L-methionine. The active-site Nucleophile is Cys-318. Residue Glu-352 is the Proton acceptor of the active site.

Belongs to the class I-like SAM-binding methyltransferase superfamily. RNA M5U methyltransferase family. TrmA subfamily.

It carries out the reaction uridine(54) in tRNA + S-adenosyl-L-methionine = 5-methyluridine(54) in tRNA + S-adenosyl-L-homocysteine + H(+). The catalysed reaction is uridine(341) in tmRNA + S-adenosyl-L-methionine = 5-methyluridine(341) in tmRNA + S-adenosyl-L-homocysteine + H(+). Dual-specificity methyltransferase that catalyzes the formation of 5-methyluridine at position 54 (m5U54) in all tRNAs, and that of position 341 (m5U341) in tmRNA (transfer-mRNA). The sequence is that of tRNA/tmRNA (uracil-C(5))-methyltransferase from Neisseria meningitidis serogroup C (strain 053442).